The following is a 180-amino-acid chain: MSELTVVAQPYAKAAFDYARDVECLDDWQQMFAITQVVLEQPNTLLVLNDLDEDGSEQPLLDLILHAGGEWLNKNFENFLRIMEENKRLKALSEVNVQFQEMKADYERTMTVTVRVSEPLDEEQMARLKQALTEKYGKAITLETQLDPSLVGGVVITAGQTVYDGSVLTNLSRLATNLHV.

Belongs to the ATPase delta chain family. F-type ATPases have 2 components, F(1) - the catalytic core - and F(0) - the membrane proton channel. F(1) has five subunits: alpha(3), beta(3), gamma(1), delta(1), epsilon(1). F(0) has three main subunits: a(1), b(2) and c(10-14). The alpha and beta chains form an alternating ring which encloses part of the gamma chain. F(1) is attached to F(0) by a central stalk formed by the gamma and epsilon chains, while a peripheral stalk is formed by the delta and b chains.

Its subcellular location is the cell inner membrane. Its function is as follows. F(1)F(0) ATP synthase produces ATP from ADP in the presence of a proton or sodium gradient. F-type ATPases consist of two structural domains, F(1) containing the extramembraneous catalytic core and F(0) containing the membrane proton channel, linked together by a central stalk and a peripheral stalk. During catalysis, ATP synthesis in the catalytic domain of F(1) is coupled via a rotary mechanism of the central stalk subunits to proton translocation. This protein is part of the stalk that links CF(0) to CF(1). It either transmits conformational changes from CF(0) to CF(1) or is implicated in proton conduction. The protein is ATP synthase subunit delta 2 of Vibrio campbellii (strain ATCC BAA-1116).